The following is a 528-amino-acid chain: Glycerol kinase 5 (528 aa).

ATP-binding residues include Ser-28 and Ser-29. Glycerol contacts are provided by Arg-98, Asp-275, and Gln-276. Positions 297, 340, and 440 each coordinate ATP.

It belongs to the FGGY kinase family.

It is found in the cytoplasm. The enzyme catalyses glycerol + ATP = sn-glycerol 3-phosphate + ADP + H(+). It functions in the pathway polyol metabolism; glycerol degradation via glycerol kinase pathway; sn-glycerol 3-phosphate from glycerol: step 1/1. Its function is as follows. Skin-specific kinase that plays a key role in glycerol metabolism, catalyzing its phosphorylation to produce sn-glycerol 3-phosphate. Involved in skin-specific regulation of sterol regulatory element-binding protein (SREBP) processing and lipid biosynthesis. This chain is Glycerol kinase 5 (GK5), found in Bos taurus (Bovine).